Reading from the N-terminus, the 112-residue chain is Putative inner membrane protein YafU (112 aa).

Residues 1–21 (MSSERDLVNFLGDFSMDVAKA) are Cytoplasmic-facing. The chain crosses the membrane as a helical span at residues 22 to 42 (VIAGGVATAIGSLASFACVSF). Glycine 43 is a topological domain (periplasmic). A helical transmembrane segment spans residues 44-64 (FPVILVGGAILLTGIVCTVVL). Topologically, residues 65–112 (NEIDAQCHLSEKLKYAIRDGLKRQQELDKWKRENMTPFMYVLNTPPVI) are cytoplasmic.

It is found in the cell inner membrane. The protein is Putative inner membrane protein YafU (yafU) of Escherichia coli (strain K12).